The sequence spans 329 residues: Glycerol-3-phosphate dehydrogenase [NAD(P)+] (329 aa).

NADPH contacts are provided by Ser-10, Trp-11, Arg-31, and Lys-105. Residues Lys-105, Gly-134, and Ser-136 each contribute to the sn-glycerol 3-phosphate site. Ala-138 contacts NADPH. Sn-glycerol 3-phosphate contacts are provided by Lys-189, Asp-242, Ser-252, Arg-253, and Asn-254. Lys-189 (proton acceptor) is an active-site residue. Arg-253 contacts NADPH. Residues Val-277 and Glu-279 each coordinate NADPH.

Belongs to the NAD-dependent glycerol-3-phosphate dehydrogenase family.

It is found in the cytoplasm. The enzyme catalyses sn-glycerol 3-phosphate + NAD(+) = dihydroxyacetone phosphate + NADH + H(+). The catalysed reaction is sn-glycerol 3-phosphate + NADP(+) = dihydroxyacetone phosphate + NADPH + H(+). Its pathway is membrane lipid metabolism; glycerophospholipid metabolism. Its function is as follows. Catalyzes the reduction of the glycolytic intermediate dihydroxyacetone phosphate (DHAP) to sn-glycerol 3-phosphate (G3P), the key precursor for phospholipid synthesis. The polypeptide is Glycerol-3-phosphate dehydrogenase [NAD(P)+] (Neisseria gonorrhoeae (strain ATCC 700825 / FA 1090)).